The primary structure comprises 437 residues: Methylenetetrahydrofolate--tRNA-(uracil-5-)-methyltransferase TrmFO (437 aa).

An FAD-binding site is contributed by 10–15 (GAGLAG).

It belongs to the MnmG family. TrmFO subfamily. FAD serves as cofactor.

The protein localises to the cytoplasm. The enzyme catalyses uridine(54) in tRNA + (6R)-5,10-methylene-5,6,7,8-tetrahydrofolate + NADH + H(+) = 5-methyluridine(54) in tRNA + (6S)-5,6,7,8-tetrahydrofolate + NAD(+). It catalyses the reaction uridine(54) in tRNA + (6R)-5,10-methylene-5,6,7,8-tetrahydrofolate + NADPH + H(+) = 5-methyluridine(54) in tRNA + (6S)-5,6,7,8-tetrahydrofolate + NADP(+). Catalyzes the folate-dependent formation of 5-methyl-uridine at position 54 (M-5-U54) in all tRNAs. The polypeptide is Methylenetetrahydrofolate--tRNA-(uracil-5-)-methyltransferase TrmFO (Pelotomaculum thermopropionicum (strain DSM 13744 / JCM 10971 / SI)).